We begin with the raw amino-acid sequence, 1306 residues long: Kinesin-like protein KIN-14L (1306 aa).

Positions 142–456 (NVKVFCRSRP…LSFSARAKNA (315 aa)) constitute a Kinesin motor domain. 223-230 (GQSRSGKT) is an ATP binding site. Coiled-coil stretches lie at residues 466–507 (IKKW…ANDQ) and 540–595 (HRIE…ALNS). Composition is skewed to polar residues over residues 592 to 611 (ALNSSDARSTIGSESASVIS) and 660 to 677 (LGSSPQAPSPSNKQTNAQ). Disordered stretches follow at residues 592 to 627 (ALNSSDARSTIGSESASVISTPKMMESTADSSSVTK), 657 to 710 (KSGL…SGAI), and 849 to 881 (KSHTSRSRSSSRGSSPGRSPVHHHHDHGSRTSL). Residues 855–867 (SRSSSRGSSPGRS) are compositionally biased toward low complexity.

It belongs to the TRAFAC class myosin-kinesin ATPase superfamily. Kinesin family. KIN-14 subfamily.

The protein is Kinesin-like protein KIN-14L of Oryza sativa subsp. japonica (Rice).